A 394-amino-acid chain; its full sequence is G2/mitotic-specific cyclin-B (394 aa).

Residues 360–394 (QSHPSPNSRLDQEEDMASSKFMSDQQATQELKSIR) are disordered. The segment covering 379 to 394 (KFMSDQQATQELKSIR) has biased composition (polar residues).

It belongs to the cyclin family. Cyclin AB subfamily. As to quaternary structure, interacts with the CDK1 protein kinase to form a serine/threonine kinase holoenzyme complex also known as maturation promoting factor (MPF). The cyclin subunit imparts substrate specificity to the complex.

In terms of biological role, essential for the control of the cell cycle at the G2/M (mitosis) transition. In Patiria pectinifera (Starfish), this protein is G2/mitotic-specific cyclin-B.